The sequence spans 114 residues: Flagellar hook-basal body complex protein FliE (114 aa).

Belongs to the FliE family.

Its subcellular location is the bacterial flagellum basal body. In Burkholderia cenocepacia (strain ATCC BAA-245 / DSM 16553 / LMG 16656 / NCTC 13227 / J2315 / CF5610) (Burkholderia cepacia (strain J2315)), this protein is Flagellar hook-basal body complex protein FliE.